The sequence spans 173 residues: MILTGKEIQKRIGKDIIITPYSEKQLNPNSYNLRLHEELLIYTELPLDMKKPNLTKKQIIPESGLLLKPGILYLGRTLEFTETHHLVPMLEGRSSIGRLGMLVHVTAGFGDVGFKGFWTLEISVIQPLIVYPGVEVCQIFYHTLEGQITEYTSGKYQANQGIQPSMLYQDFEK.

Residues 93 to 98, Asp-111, 119 to 121, and Gln-138 contribute to the dCTP site; these read RSSIGR and TLE. Glu-121 serves as the catalytic Proton donor/acceptor.

Belongs to the dCTP deaminase family. In terms of assembly, homotrimer.

It carries out the reaction dCTP + 2 H2O = dUMP + NH4(+) + diphosphate. The protein operates within pyrimidine metabolism; dUMP biosynthesis; dUMP from dCTP: step 1/1. Functionally, bifunctional enzyme that catalyzes both the deamination of dCTP to dUTP and the hydrolysis of dUTP to dUMP without releasing the toxic dUTP intermediate. The protein is dCTP deaminase, dUMP-forming of Leptospira borgpetersenii serovar Hardjo-bovis (strain JB197).